Reading from the N-terminus, the 305-residue chain is Translation initiation factor eIF2B subunit alpha (305 aa).

K35 carries the N6-acetyllysine modification.

It belongs to the eIF-2B alpha/beta/delta subunits family. Component of the translation initiation factor 2B (eIF2B) complex which is a heterodecamer of two sets of five different subunits: alpha, beta, gamma, delta and epsilon. Subunits alpha, beta and delta comprise a regulatory subcomplex and subunits epsilon and gamma comprise a catalytic subcomplex. Within the complex, the hexameric regulatory complex resides at the center, with the two heterodimeric catalytic subcomplexes bound on opposite sides.

Its subcellular location is the cytoplasm. The protein resides in the cytosol. Its activity is regulated as follows. Activated by the chemical integrated stress response (ISR) inhibitor ISRIB which stimulates guanine nucleotide exchange factor activity for both phosphorylated and unphosphorylated eIF2. Its function is as follows. Acts as a component of the translation initiation factor 2B (eIF2B) complex, which catalyzes the exchange of GDP for GTP on eukaryotic initiation factor 2 (eIF2) gamma subunit. Its guanine nucleotide exchange factor activity is repressed when bound to eIF2 complex phosphorylated on the alpha subunit, thereby limiting the amount of methionyl-initiator methionine tRNA available to the ribosome and consequently global translation is repressed. This is Translation initiation factor eIF2B subunit alpha (Eif2b1) from Rattus norvegicus (Rat).